The sequence spans 658 residues: DNA mismatch repair protein MutL (658 aa).

Basic and acidic residues predominate over residues 114 to 130 (RQEDSSHATQVKAEDGK). Disordered regions lie at residues 114–137 (RQED…PTAA), 369–401 (DYPT…APQQ), and 438–457 (FGNM…LSDG).

The protein belongs to the DNA mismatch repair MutL/HexB family.

Functionally, this protein is involved in the repair of mismatches in DNA. It is required for dam-dependent methyl-directed DNA mismatch repair. May act as a 'molecular matchmaker', a protein that promotes the formation of a stable complex between two or more DNA-binding proteins in an ATP-dependent manner without itself being part of a final effector complex. The polypeptide is DNA mismatch repair protein MutL (Neisseria meningitidis serogroup A / serotype 4A (strain DSM 15465 / Z2491)).